The sequence spans 278 residues: Pyrroline-5-carboxylate reductase (278 aa).

Belongs to the pyrroline-5-carboxylate reductase family.

It is found in the cytoplasm. It carries out the reaction L-proline + NADP(+) = (S)-1-pyrroline-5-carboxylate + NADPH + 2 H(+). The catalysed reaction is L-proline + NAD(+) = (S)-1-pyrroline-5-carboxylate + NADH + 2 H(+). Its pathway is amino-acid biosynthesis; L-proline biosynthesis; L-proline from L-glutamate 5-semialdehyde: step 1/1. This Actinidia chinensis var. chinensis (Chinese soft-hair kiwi) protein is Pyrroline-5-carboxylate reductase.